The following is a 264-amino-acid chain: 14-3-3-like protein GF14-A (264 aa).

The segment at 245–264 is disordered; that stretch reads DMQDDGGDEMRDATKPEDEH. Positions 252-264 are enriched in basic and acidic residues; that stretch reads DEMRDATKPEDEH.

Belongs to the 14-3-3 family.

Is associated with a DNA binding complex that binds to the G box, a well-characterized cis-acting DNA regulatory element found in plant genes. This Oryza sativa subsp. japonica (Rice) protein is 14-3-3-like protein GF14-A (GF14A).